The chain runs to 159 residues: Ribosomal RNA large subunit methyltransferase H (159 aa).

S-adenosyl-L-methionine-binding positions include Leu76, Gly108, and 127 to 132; that span reads FSKMTF.

It belongs to the RNA methyltransferase RlmH family. In terms of assembly, homodimer.

It is found in the cytoplasm. The enzyme catalyses pseudouridine(1915) in 23S rRNA + S-adenosyl-L-methionine = N(3)-methylpseudouridine(1915) in 23S rRNA + S-adenosyl-L-homocysteine + H(+). In terms of biological role, specifically methylates the pseudouridine at position 1915 (m3Psi1915) in 23S rRNA. The polypeptide is Ribosomal RNA large subunit methyltransferase H (Clostridium botulinum (strain Okra / Type B1)).